Here is a 397-residue protein sequence, read N- to C-terminus: Putative efflux system protein YvrP (397 aa).

Residues Leu-8–Phe-28 form a helical membrane-spanning segment. A coiled-coil region spans residues Glu-106–Lys-183.

The protein belongs to the membrane fusion protein (MFP) (TC 8.A.1) family.

The protein localises to the cell membrane. This chain is Putative efflux system protein YvrP (yvrP), found in Bacillus subtilis (strain 168).